A 395-amino-acid chain; its full sequence is PCI domain-containing protein 2 homolog (395 aa).

The PCI domain occupies 208 to 389 (ITYKYFVGRR…NKLVVSKQNP (182 aa)).

The protein belongs to the CSN12 family. In terms of assembly, component of the nuclear pore complex (NPC)-associated TREX-2/AMEX complex (anchoring and mRNA export complex), composed of e(y)2, xmas and PCID2. Interaction between the TREX-2/AMEX complex and the ORC complex is required for ORC localization to mRNPs, and consequently mRNA export. Within the TREX-2/AMEX-ORC complex, interacts with Orc3 and Orc4. Interacts with sbr/NXF1. Interacts with Moe. Interacts with nudC; required to maintain stability in the cytoplasm. Mono- and poly-ubiquitinated.

The protein localises to the nucleus. It is found in the cytoplasm. Its subcellular location is the nucleus membrane. It localises to the cytoskeleton. In terms of biological role, required for the export of nuclear mRNAs and involved in mRNA trafficking in the cytoplasm. Component of the nuclear pore complex (NPC)-associated TREX-2/AMEX complex (anchoring and mRNA export complex) which functions in docking export-competent ribonucleoprotein particles (mRNPs) to the nuclear entrance of the nuclear pore complex (nuclear basket), thereby enabling the export of mRNAs to the cytoplasm through the nuclear pores. Within the complex, specifically promotes the association of factors involved in regulating nuclear mRNA export, such as Moe, sbr/NXF1 and the ORC complex, to the mRNPs particles. In the cytoplasm, functions independently of its role in the TREX-2/AMEX complex, to promote cytoplasmic mRNA trafficking together with nudC. Associates with translationally active polysomes. This Drosophila melanogaster (Fruit fly) protein is PCI domain-containing protein 2 homolog.